Reading from the N-terminus, the 475-residue chain is tRNA modification GTPase MnmE (475 aa).

Residues Arg32, Glu97, and Lys136 each contribute to the (6S)-5-formyl-5,6,7,8-tetrahydrofolate site. A TrmE-type G domain is found at 232–396 (GVATVIAGRP…LKSRMSSMVE (165 aa)). GTP-binding positions include 242-247 (NAGKST), 261-267 (SHMPGTT), 286-289 (DTAG), and 377-379 (SAR). Mg(2+) contacts are provided by Ser246 and Thr267. Residue Lys475 coordinates (6S)-5-formyl-5,6,7,8-tetrahydrofolate.

Belongs to the TRAFAC class TrmE-Era-EngA-EngB-Septin-like GTPase superfamily. TrmE GTPase family. In terms of assembly, homodimer. Heterotetramer of two MnmE and two MnmG subunits. K(+) serves as cofactor.

It is found in the cytoplasm. In terms of biological role, exhibits a very high intrinsic GTPase hydrolysis rate. Involved in the addition of a carboxymethylaminomethyl (cmnm) group at the wobble position (U34) of certain tRNAs, forming tRNA-cmnm(5)s(2)U34. This Chlorobium phaeobacteroides (strain DSM 266 / SMG 266 / 2430) protein is tRNA modification GTPase MnmE.